We begin with the raw amino-acid sequence, 213 residues long: N-(5'-phosphoribosyl)anthranilate isomerase (213 aa).

This sequence belongs to the TrpF family.

It carries out the reaction N-(5-phospho-beta-D-ribosyl)anthranilate = 1-(2-carboxyphenylamino)-1-deoxy-D-ribulose 5-phosphate. It participates in amino-acid biosynthesis; L-tryptophan biosynthesis; L-tryptophan from chorismate: step 3/5. This chain is N-(5'-phosphoribosyl)anthranilate isomerase, found in Leptospira interrogans serogroup Icterohaemorrhagiae serovar copenhageni (strain Fiocruz L1-130).